Reading from the N-terminus, the 469-residue chain is Tetratricopeptide repeat protein 38 (469 aa).

TPR repeat units lie at residues 107-140 (REKL…HPTD), 179-212 (SYVK…ERTD), and 251-284 (CHVY…QCFA).

It belongs to the TTC38 family.

The sequence is that of Tetratricopeptide repeat protein 38 (ttc38) from Xenopus laevis (African clawed frog).